Consider the following 440-residue polypeptide: Asparagine--tRNA ligase (440 aa).

The protein belongs to the class-II aminoacyl-tRNA synthetase family. In terms of assembly, homodimer.

Its subcellular location is the cytoplasm. It carries out the reaction tRNA(Asn) + L-asparagine + ATP = L-asparaginyl-tRNA(Asn) + AMP + diphosphate + H(+). This chain is Asparagine--tRNA ligase, found in Chloroflexus aurantiacus (strain ATCC 29364 / DSM 637 / Y-400-fl).